The primary structure comprises 316 residues: Transcription initiation factor IIB (316 aa).

The segment at 11 to 42 (PRVTCPNHPDAILVEDYRAGDMICPECGLVVG) adopts a TFIIB-type zinc-finger fold. The Zn(2+) site is built by Cys15, His18, Cys34, and Cys37. 3 positions are modified to phosphoserine: Ser70, Ser76, and Ser92. A run of 2 repeats spans residues 124–200 (MADR…LILK) and 218–294 (FCSN…LIYP). DNA contacts are provided by Lys152, Arg154, Lys189, and Lys196. The core promoter DNA-binding stretch occupies residues 189–193 (KEIGR). N6-acetyllysine; by autocatalysis is present on Lys238. The segment at 244-316 (LVPGRSPISV…DTPVDKLPQL (73 aa)) is necessary for TATA box-bound complex TBP formation. Arg248 serves as a coordination point for DNA. The segment at 249 to 252 (SPIS) is core promoter DNA-binding. DNA is bound by residues Lys272, Ala281, Thr284, Arg286, and Arg290. A core promoter DNA-binding region spans residues 283 to 286 (VTIR).

This sequence belongs to the TFIIB family. Found in a ternary complex with TATA box-bound TBP. Part of a TFIID-containing RNA polymerase II pre-initiation complex (PIC) that is composed of TBP and at least GTF2A1, GTF2A2, GTF2E1, GTF2E2, GTF2F1, GTF2H2, GTF2H3, GTF2H4, GTF2H5, GTF2B, TCEA1, ERCC2, ERCC3, TAF1, TAF2, TAF3, TAF4, TAF5, TAF6, TAF7, TAF8, TAF9, TAF10, TAF11, TAF12 and TAF13. Associates with TFIID-TFIIA (DA complex) to form TFIID-TFIIA-TFIIB (DAB complex), which is then recognized by RNA polymerase II (Pol II). Found in a RNA polymerase II initiation complex. Interacts (via C-terminus) with TBP; this interaction with TATA box-bound TBP guides Pol II into the PIC. Interacts (via N-terminus) with Pol II. Interacts (via C-terminus) with SSU72; this interaction is inhibited by SYMPK. Interacts with NR2F1; this interaction is direct. Interacts with PGR. Interacts with ESR1. Interacts with GTF2F1 (via C-terminus and preferentially via acetylated form); this interaction prevents binding of GTF2B to GTF2F2. Interacts with GTF2F2 (via N-terminus); this interaction is inhibited in presence of GTF2F1. Interacts with the transcription elongation factor TCEA2. Interacts with HSF1 (via transactivation domain). Interacts with GPBP1. Acetylated. Autoacetylated; autoacetylation at Lys-238 stimulates transcription activation.

The protein localises to the nucleus. It is found in the chromosome. The enzyme catalyses L-lysyl-[protein] + acetyl-CoA = N(6)-acetyl-L-lysyl-[protein] + CoA + H(+). In terms of biological role, general transcription factor that plays a role in transcription initiation by RNA polymerase II (Pol II). Involved in the pre-initiation complex (PIC) formation and Pol II recruitment at promoter DNA. Together with the TATA box-bound TBP forms the core initiation complex and provides a bridge between TBP and the Pol II-TFIIF complex. Released from the PIC early following the onset of transcription during the initiation and elongation transition and reassociates with TBP during the next transcription cycle. Associates with chromatin to core promoter-specific regions. Binds to two distinct DNA core promoter consensus sequence elements in a TBP-independent manner; these IIB-recognition elements (BREs) are localized immediately upstream (BREu), 5'-[GC][GC][GA]CGCC-3', and downstream (BREd), 5'-[GA]T[TGA][TG][GT][TG][TG]-3', of the TATA box element. Modulates transcription start site selection. Also exhibits autoacetyltransferase activity that contributes to the activated transcription. The sequence is that of Transcription initiation factor IIB from Pongo abelii (Sumatran orangutan).